The chain runs to 89 residues: Small ribosomal subunit protein uS15 (89 aa).

Belongs to the universal ribosomal protein uS15 family. In terms of assembly, part of the 30S ribosomal subunit. Forms a bridge to the 50S subunit in the 70S ribosome, contacting the 23S rRNA.

Its function is as follows. One of the primary rRNA binding proteins, it binds directly to 16S rRNA where it helps nucleate assembly of the platform of the 30S subunit by binding and bridging several RNA helices of the 16S rRNA. In terms of biological role, forms an intersubunit bridge (bridge B4) with the 23S rRNA of the 50S subunit in the ribosome. In Methylorubrum populi (strain ATCC BAA-705 / NCIMB 13946 / BJ001) (Methylobacterium populi), this protein is Small ribosomal subunit protein uS15.